Here is an 858-residue protein sequence, read N- to C-terminus: Zinc finger protein ZXDC (858 aa).

2 disordered regions span residues 1-127 and 151-174; these read MDLP…APAG and PGPA…STPG. 3 stretches are compositionally biased toward low complexity: residues 23–35, 84–97, and 151–171; these read PLRR…GASP, GGAA…QEAE, and PGPA…SGPS. Position 34 is a phosphoserine (serine 34). Residue threonine 172 is modified to Phosphothreonine. 10 C2H2-type zinc fingers span residues 175–199, 208–232, 238–262, 268–290, 297–321, 328–352, 358–382, 388–412, 418–442, and 451–476; these read YRCP…LLTH, FKCP…LQSH, FGCP…MKGH, FKCE…QRSH, YKCD…NRAH, FSCS…LRSH, FICD…RRKH, FTCP…SITH, FECP…SKKH, and SRCP…VRQH. A required for transcriptional activation region spans residues 579–688; it reads DSPLVLGTAA…HGLPQSTLPS (110 aa). Residue lysine 660 forms a Glycyl lysine isopeptide (Lys-Gly) (interchain with G-Cter in SUMO) linkage. Disordered regions lie at residues 660-696, 726-756, and 837-858; these read KVEP…HGAQ, KEKK…SPPH, and GGPA…QDLQ. Serine 665 carries the post-translational modification Phosphoserine. The segment covering 675-687 has biased composition (polar residues); the sequence is QEGSHGLPQSTLP. The interaction with CIITA stretch occupies residues 781–858; sequence PAAGVQCGAQ…GSTINLQDLQ (78 aa). Residues 847–858 are compositionally biased toward polar residues; that stretch reads FPGSTINLQDLQ.

Belongs to the ZXD family. As to quaternary structure, self-associates. Interacts with ZXDA and CIITA. In terms of processing, sumoylated at Lys-660 with SUMO1, SUMO2 and SUMO3; sumoylation enhances the activity of the transcriptional activation domain. Expressed at high levels in heart, kidney, liver and testis, at moderate levels in brain and stomach, and at low levels in lung, muscle, placenta, small intestine and spleen.

It localises to the nucleus. Cooperates with CIITA to promote transcription of MHC class I and MHC class II genes. The sequence is that of Zinc finger protein ZXDC (ZXDC) from Homo sapiens (Human).